The following is a 103-amino-acid chain: N(4)-acetylcytidine amidohydrolase (103 aa).

One can recognise an ASCH domain in the interval 6-100 (ITFFQRFQDD…GESQFYVIEF (95 aa)). Catalysis depends on Lys21, which acts as the Proton acceptor. Thr24 serves as the catalytic Nucleophile. The active-site Proton donor is Glu74.

It belongs to the N(4)-acetylcytidine amidohydrolase family.

The enzyme catalyses N(4)-acetylcytidine + H2O = cytidine + acetate + H(+). The catalysed reaction is N(4)-acetyl-2'-deoxycytidine + H2O = 2'-deoxycytidine + acetate + H(+). It carries out the reaction N(4)-acetylcytosine + H2O = cytosine + acetate + H(+). Its function is as follows. Catalyzes the hydrolysis of N(4)-acetylcytidine (ac4C). This is N(4)-acetylcytidine amidohydrolase from Klebsiella pneumoniae subsp. pneumoniae (strain ATCC 700721 / MGH 78578).